A 189-amino-acid chain; its full sequence is dTTP/UTP pyrophosphatase (189 aa).

The active-site Proton acceptor is the Asp70.

Belongs to the Maf family. YhdE subfamily. Requires a divalent metal cation as cofactor.

It localises to the cytoplasm. The enzyme catalyses dTTP + H2O = dTMP + diphosphate + H(+). It carries out the reaction UTP + H2O = UMP + diphosphate + H(+). Functionally, nucleoside triphosphate pyrophosphatase that hydrolyzes dTTP and UTP. May have a dual role in cell division arrest and in preventing the incorporation of modified nucleotides into cellular nucleic acids. This chain is dTTP/UTP pyrophosphatase, found in Akkermansia muciniphila (strain ATCC BAA-835 / DSM 22959 / JCM 33894 / BCRC 81048 / CCUG 64013 / CIP 107961 / Muc).